Reading from the N-terminus, the 345-residue chain is Phosphoribosylformylglycinamidine cyclo-ligase (345 aa).

The protein belongs to the AIR synthase family.

The protein localises to the cytoplasm. It catalyses the reaction 2-formamido-N(1)-(5-O-phospho-beta-D-ribosyl)acetamidine + ATP = 5-amino-1-(5-phospho-beta-D-ribosyl)imidazole + ADP + phosphate + H(+). The protein operates within purine metabolism; IMP biosynthesis via de novo pathway; 5-amino-1-(5-phospho-D-ribosyl)imidazole from N(2)-formyl-N(1)-(5-phospho-D-ribosyl)glycinamide: step 2/2. This Shewanella sp. (strain ANA-3) protein is Phosphoribosylformylglycinamidine cyclo-ligase.